Consider the following 105-residue polypeptide: Endogenous retrovirus group K member 104 Rec protein (105 aa).

The disordered stretch occupies residues 1–43 (MNPSEMQRKAPPRRRRHCNRAPLTHKMNKMVTSEEEMKLPSTK). Basic residues predominate over residues 10 to 19 (APPRRRRHCN). The short motif at 13–20 (RRRRHCNR) is the Nuclear localization signal element. Positions 50-59 (WAQLKKLTQL) match the Nuclear export signal motif.

In terms of assembly, forms homodimers, homotrimers, and homotetramers via a C-terminal domain. Associates with XPO1 and with ZNF145.

It localises to the cytoplasm. It is found in the nucleus. The protein resides in the nucleolus. In terms of biological role, retroviral replication requires the nuclear export and translation of unspliced, singly-spliced and multiply-spliced derivatives of the initial genomic transcript. Rec interacts with a highly structured RNA element (RcRE) present in the viral 3'LTR and recruits the cellular nuclear export machinery. This permits export to the cytoplasm of unspliced genomic or incompletely spliced subgenomic viral transcripts. The polypeptide is Endogenous retrovirus group K member 104 Rec protein (HERV-K104) (Homo sapiens (Human)).